We begin with the raw amino-acid sequence, 425 residues long: Serine--tRNA ligase (425 aa).

Residue 228-230 (TAE) participates in L-serine binding. 259–261 (RSE) lines the ATP pocket. E282 lines the L-serine pocket. 346-349 (EIAS) is an ATP binding site. Residue S382 participates in L-serine binding.

Belongs to the class-II aminoacyl-tRNA synthetase family. Type-1 seryl-tRNA synthetase subfamily. Homodimer. The tRNA molecule binds across the dimer.

Its subcellular location is the cytoplasm. The enzyme catalyses tRNA(Ser) + L-serine + ATP = L-seryl-tRNA(Ser) + AMP + diphosphate + H(+). It carries out the reaction tRNA(Sec) + L-serine + ATP = L-seryl-tRNA(Sec) + AMP + diphosphate + H(+). It participates in aminoacyl-tRNA biosynthesis; selenocysteinyl-tRNA(Sec) biosynthesis; L-seryl-tRNA(Sec) from L-serine and tRNA(Sec): step 1/1. Catalyzes the attachment of serine to tRNA(Ser). Is also able to aminoacylate tRNA(Sec) with serine, to form the misacylated tRNA L-seryl-tRNA(Sec), which will be further converted into selenocysteinyl-tRNA(Sec). The chain is Serine--tRNA ligase from Rickettsia massiliae (strain Mtu5).